The following is a 35-amino-acid chain: Photosystem II reaction center protein M (35 aa).

Residues 5–25 (IFGLTATALFIIIPTSFLLIL) form a helical membrane-spanning segment.

It belongs to the PsbM family. As to quaternary structure, PSII is composed of 1 copy each of membrane proteins PsbA, PsbB, PsbC, PsbD, PsbE, PsbF, PsbH, PsbI, PsbJ, PsbK, PsbL, PsbM, PsbT, PsbX, PsbY, PsbZ, Psb30/Ycf12, at least 3 peripheral proteins of the oxygen-evolving complex and a large number of cofactors. It forms dimeric complexes.

Its subcellular location is the plastid. The protein localises to the chloroplast thylakoid membrane. In terms of biological role, one of the components of the core complex of photosystem II (PSII). PSII is a light-driven water:plastoquinone oxidoreductase that uses light energy to abstract electrons from H(2)O, generating O(2) and a proton gradient subsequently used for ATP formation. It consists of a core antenna complex that captures photons, and an electron transfer chain that converts photonic excitation into a charge separation. This subunit is found at the monomer-monomer interface. The sequence is that of Photosystem II reaction center protein M from Tetradesmus obliquus (Green alga).